The chain runs to 400 residues: Sensor histidine kinase LnrJ (400 aa).

Over 1 to 2 the chain is Extracellular; the sequence is MK. The helical transmembrane segment at 3-23 threads the bilayer; it reads ALFFTRMFTLMVSCLMYLSIV. The Cytoplasmic portion of the chain corresponds to 24–27; the sequence is KEDN. A helical transmembrane segment spans residues 28–48; sequence WFGYVFIAAGAAMYAANHVLL. Topologically, residues 49 to 61 are extracellular; it reads TKETNAIWFCLID. The helical transmembrane segment at 62 to 82 threads the bilayer; it reads IAIGFSFGFIFPGTGLFIIML. The Cytoplasmic portion of the chain corresponds to 83 to 101; the sequence is CPVAVAFFLRGFPKRTAWS. A helical transmembrane segment spans residues 102-122; that stretch reads VLCLSSILFLTVLIRTYAMFG. The Extracellular segment spans residues 123 to 125; that stretch reads NEF. Residues 126-146 traverse the membrane as a helical segment; that stretch reads VIDHLTSMTFVVFCGVVGKLI. Residues 147–400 are Cytoplasmic-facing; that stretch reads RKLLDAQDTA…GPVQQKESLS (254 aa). One can recognise a Histidine kinase domain in the interval 190–385; the sequence is IYERNRMARE…TVNAEFSLAN (196 aa). His201 carries the phosphohistidine; by autocatalysis modification.

Post-translationally, autophosphorylated.

The protein localises to the cell membrane. The catalysed reaction is ATP + protein L-histidine = ADP + protein N-phospho-L-histidine.. Functionally, required for resistance to linearmycins, a family of antibiotic-specialized metabolites produced by some streptomycetes. Member of the two-component regulatory system LnrJ/LnrK, which induces expression of the LnrLMN ABC transporter in response to linearmycins and other polyenes. Acts as a specific sensor for linearmycin, either directly through binding or indirectly through membrane perturbation. Probably activates LnrK by phosphorylation. May also promote biofilm formation. In Bacillus subtilis (strain 168), this protein is Sensor histidine kinase LnrJ.